The sequence spans 157 residues: MSKNVSRNCLGSMEDIKKVFQRFDKNNDGKISIDELKDVIGALSPNASQEETKAMMKEFDLDGNGFIDLDEFVALFQISDQSSNNSAIRDLKEAFDLYDLDRNGRISANELHSVMKNLGEKCSIQDCQRMINKVDSDGDGCVDFEEFKKMMMINGSA.

EF-hand domains follow at residues 11 to 46 (GSME…LSPN), 47 to 82 (ASQE…SDQS), 86 to 121 (SAIR…LGEK), and 122 to 157 (CSIQ…NGSA). Residues Asp24, Asn26, Asp28, Lys30, Glu35, Asp60, Asp62, Asn64, Glu71, Asp99, Asp101, Asn103, Arg105, Glu110, Asp135, Asp137, Asp139, Cys141, and Glu146 each contribute to the Ca(2+) site.

Its function is as follows. Potential calcium sensor. The sequence is that of Probable calcium-binding protein CML23 (CML23) from Arabidopsis thaliana (Mouse-ear cress).